A 247-amino-acid chain; its full sequence is 5'-nucleotidase SurE (247 aa).

Positions 8, 9, 39, and 95 each coordinate a divalent metal cation.

This sequence belongs to the SurE nucleotidase family. The cofactor is a divalent metal cation.

The protein resides in the cytoplasm. It catalyses the reaction a ribonucleoside 5'-phosphate + H2O = a ribonucleoside + phosphate. Functionally, nucleotidase that shows phosphatase activity on nucleoside 5'-monophosphates. The polypeptide is 5'-nucleotidase SurE (Thermotoga petrophila (strain ATCC BAA-488 / DSM 13995 / JCM 10881 / RKU-1)).